Consider the following 319-residue polypeptide: Cutinase cut1 (319 aa).

The signal sequence occupies residues 1-58 (MPPHAARPGPAQNRRGRAMAVITPRRERSSLLSRALRFTAAAATALVTAVSLAAPAHA). Tyr118 lines the poly(ethylene terephthalate) pocket. The active-site Nucleophile is the Ser188. Residues Met189 and Trp213 each coordinate poly(ethylene terephthalate). Residues Asp234 and His266 each act as charge relay system in the active site. Cys299 and Cys317 are disulfide-bonded.

Belongs to the AB hydrolase superfamily.

Its subcellular location is the secreted. The protein resides in the periplasm. It catalyses the reaction an acetyl ester + H2O = an aliphatic alcohol + acetate + H(+). The enzyme catalyses a butanoate ester + H2O = an aliphatic alcohol + butanoate + H(+). The catalysed reaction is pentanoate ester + H2O = pentanoate + an aliphatic alcohol + H(+). It carries out the reaction an octanoate ester + H2O = an aliphatic alcohol + octanoate + H(+). It catalyses the reaction decanoate ester + H2O = decanoate + an aliphatic alcohol + H(+). The enzyme catalyses a dodecanoate ester + H2O = an aliphatic alcohol + dodecanoate + H(+). The catalysed reaction is a tetradecanoate ester + H2O = an aliphatic alcohol + tetradecanoate + H(+). It carries out the reaction hexadecanoate ester + H2O = an aliphatic alcohol + hexadecanoate + H(+). It catalyses the reaction cutin + H2O = cutin monomers.. The enzyme catalyses (ethylene terephthalate)(n) + H2O = (ethylene terephthalate)(n-1) + 4-[(2-hydroxyethoxy)carbonyl]benzoate + H(+). With respect to regulation, activated by magnesium ions. Activated by calcium ions. Its function is as follows. Catalyzes the hydrolysis of cutin, a polyester that forms the structure of plant cuticle. Shows esterase activity towards p-nitrophenol-linked aliphatic esters (pNP-aliphatic esters). Capable of degrading the plastic poly(ethylene terephthalate) (PET), the most abundant polyester plastic in the world. The chain is Cutinase cut1 from Thermobifida fusca (Thermomonospora fusca).